The sequence spans 175 residues: Transcriptional repressor NrdR (175 aa).

A zinc finger spans residues 3-32; sequence CPYCSHPDSKVIDSRDVDDGVRRRRECVVC. An ATP-cone domain is found at 47–137; that stretch reads LFVVKKDQRR…VYREFTDITQ (91 aa).

Belongs to the NrdR family. It depends on Zn(2+) as a cofactor.

In terms of biological role, negatively regulates transcription of bacterial ribonucleotide reductase nrd genes and operons by binding to NrdR-boxes. In Dehalococcoides mccartyi (strain ATCC BAA-2100 / JCM 16839 / KCTC 5957 / BAV1), this protein is Transcriptional repressor NrdR.